Here is a 198-residue protein sequence, read N- to C-terminus: Probable molybdenum cofactor guanylyltransferase (198 aa).

GTP-binding positions include 9 to 11 (LAG), Lys-22, Asp-66, and Asp-95. Residue Asp-95 participates in Mg(2+) binding.

It belongs to the MobA family. It depends on Mg(2+) as a cofactor.

It localises to the cytoplasm. It catalyses the reaction Mo-molybdopterin + GTP + H(+) = Mo-molybdopterin guanine dinucleotide + diphosphate. Its function is as follows. Transfers a GMP moiety from GTP to Mo-molybdopterin (Mo-MPT) cofactor (Moco or molybdenum cofactor) to form Mo-molybdopterin guanine dinucleotide (Mo-MGD) cofactor. The polypeptide is Probable molybdenum cofactor guanylyltransferase (Clostridium perfringens (strain 13 / Type A)).